The primary structure comprises 611 residues: Sensor histidine kinase WalK (611 aa).

Over 1–13 (MNKVGFFRSIQFK) the chain is Cytoplasmic. The chain crosses the membrane as a helical span at residues 14 to 34 (ITLIYVLLIIIAMQIIGVYFV). Residues 35-182 (NQVEKSLISS…VFNQMKTINT (148 aa)) lie on the Extracellular side of the membrane. The helical transmembrane segment at 183 to 203 (ILASGTGLALVLTALLGIFLA) threads the bilayer. The 53-residue stretch at 204–256 (RTITHPLSDMRKQAMELAKGNFSRKVKKYGHDEIGQLATTFNHLTRELEDAQA) folds into the HAMP domain. Over 204–611 (RTITHPLSDM…EEQEDDWDEA (408 aa)) the chain is Cytoplasmic. The PAS domain occupies 263–324 (RKLASVIAYM…QENYTFEDLV (62 aa)). Positions 325-379 (EQQDSMLLEIERDDELTVLRVNFSVIQREHGKIDGLIAVIYDVTEQEKMDQERRE) constitute a PAC domain. In terms of domain architecture, Histidine kinase spans 383–602 (NVSHELRTPL…TITFTLPYKE (220 aa)). Phosphohistidine; by autocatalysis is present on histidine 386.

Homodimer. Interacts with YycH and YycI. Autophosphorylated.

It is found in the cell membrane. It catalyses the reaction ATP + protein L-histidine = ADP + protein N-phospho-L-histidine.. Functionally, member of the two-component regulatory system WalK/WalR involved in the regulation of the ftsAZ operon, the yocH and ykvT, cwlO, lytE, ydjM, yjeA, yoeB genes and the tagAB and tagDEF operons. Phosphorylates WalR. This Bacillus subtilis (strain 168) protein is Sensor histidine kinase WalK.